Here is a 423-residue protein sequence, read N- to C-terminus: Acyl-coenzyme A diphosphatase FITM2 (423 aa).

Positions 1–47 (MATKRRPLRPNLGGTAGSPSSSGSNMNFRPGGPDITRSEARGTRPTA) are disordered. Residues 1–75 (MATKRRPLRP…KTIFFNTDLK (75 aa)) are Cytoplasmic-facing. The helical transmembrane segment at 76 to 96 (VALYLGSLFVISVIGDFVPFP) threads the bilayer. Over 97-113 (KTYFARSDNLFNQYFVK) the chain is Lumenal. The chain crosses the membrane as a helical span at residues 114–134 (IGWGWTLLFVVPFLVLSAYTI). The Cytoplasmic portion of the chain corresponds to 135–146 (TCGDHKRMLRHH). A helical transmembrane segment spans residues 147 to 167 (FPRIVIATFFWFFWTKLFNVV). Over 168 to 191 (ENSYGRCTTKGYATKSSCLKAGHL) the chain is Lumenal. A helical membrane pass occupies residues 192–212 (WKGFDISGHAFILIHSSLVLI). H200 is a catalytic residue. The Cytoplasmic segment spans residues 213-270 (EEARPIIRWETIKEHIRNERHNRSTAENSGTNPLRTLNEEQMRSLQFLYKRLTPIIRT). The helical transmembrane segment at 271-291 (LFIGMAALQLLWDIMLVGTML) threads the bilayer. Residues 292–299 (YYHRMIEK) are Lumenal-facing. Residue H294 is part of the active site. Residues 300-320 (VISGIIAILTWYFTYRFWYPT) traverse the membrane as a helical segment. Residues 321–423 (PGLLPEAPGN…RDREQQTLES (103 aa)) lie on the Cytoplasmic side of the membrane. Disordered stretches follow at residues 344–381 (FKRPSHLSTGAATTSSGSNSSRTNLNGKAATTGVPRDQ) and 400–423 (AAANLLMSDQQKRERDREQQTLES). The span at 351–367 (STGAATTSSGSNSSRTN) shows a compositional bias: low complexity. Positions 409 to 423 (QQKRERDREQQTLES) are enriched in basic and acidic residues.

The protein belongs to the FIT family. FIT2 subfamily.

It localises to the endoplasmic reticulum membrane. The enzyme catalyses an acyl-CoA + H2O = an acyl-4'-phosphopantetheine + adenosine 3',5'-bisphosphate + 2 H(+). In terms of biological role, fatty acyl-coenzyme A (CoA) diphosphatase that hydrolyzes fatty acyl-CoA to yield acyl-4'-phosphopantetheine and adenosine 3',5'-bisphosphate. Preferentially hydrolyzes unsaturated long-chain acyl-CoA substrates in the endoplasmic reticulum (ER) lumen. This catalytic activity is required for maintaining ER structure and for lipid droplets (LDs) biogenesis, which are lipid storage organelles involved in maintaining lipid and energy homeostasis. May directly bind to diacylglycerol (DAGs) and triacylglycerol, which is also important for LD biogenesis. May support directional budding of nacent LDs from the ER into the cytosol by reducing DAG levels at sites of LD formation. Plays a role in the regulation of cell morphology and cytoskeletal organization. Required for correct morphology of nociceptive multi-dendritic sensory neurons. Required for normal mechanical amplification in hearing. The chain is Acyl-coenzyme A diphosphatase FITM2 from Drosophila melanogaster (Fruit fly).